A 156-amino-acid polypeptide reads, in one-letter code: Cell division protein SepF (156 aa).

A disordered region spans residues 15–58 (SDVVPEDEDDEVIDEEPESSFDTDRSVTPIPAASTQPSTSQRKS). The span at 18–35 (VPEDEDDEVIDEEPESSF) shows a compositional bias: acidic residues. Residues 47–57 (ASTQPSTSQRK) are compositionally biased toward polar residues.

The protein belongs to the SepF family. In terms of assembly, homodimer. Interacts with FtsZ.

It localises to the cytoplasm. Its function is as follows. Cell division protein that is part of the divisome complex and is recruited early to the Z-ring. Probably stimulates Z-ring formation, perhaps through the cross-linking of FtsZ protofilaments. Its function overlaps with FtsA. This chain is Cell division protein SepF, found in Bifidobacterium animalis subsp. lactis (strain AD011).